Consider the following 189-residue polypeptide: UPF0301 protein CAB604 (189 aa).

The protein belongs to the UPF0301 (AlgH) family.

The protein is UPF0301 protein CAB604 of Chlamydia abortus (strain DSM 27085 / S26/3) (Chlamydophila abortus).